A 381-amino-acid chain; its full sequence is Beta-1,4-galactosyltransferase 5 (381 aa).

At 1–11 (MPTHLRFRRRS) the chain is on the cytoplasmic side. The chain crosses the membrane as a helical; Signal-anchor for type II membrane protein span at residues 12–32 (FLGLLFLFSLSTSALYFIYSA). Residues 33 to 381 (PGIVNEYLFM…SRDLAPVADY (349 aa)) lie on the Lumenal side of the membrane. N-linked (GlcNAc...) asparagine glycosylation is found at N73, N82, and N120. C106 and C151 are joined by a disulfide. UDP-alpha-D-galactose-binding positions include 162-166 (PFRNR), 201-203 (FNR), 228-229 (VD), Y257, and W289. An intrachain disulfide couples C222 to C241. D229 provides a ligand contact to Mn(2+). Residue 291–294 (GEDD) participates in N-acetyl-D-glucosamine binding. H322 is a binding site for Mn(2+). 322 to 323 (HH) is a UDP-alpha-D-galactose binding site. R333 contacts N-acetyl-D-glucosamine. N-linked (GlcNAc...) asparagine glycosylation is present at N366.

Belongs to the glycosyltransferase 7 family. Mn(2+) serves as cofactor.

It localises to the golgi apparatus. The protein resides in the golgi stack membrane. The catalysed reaction is a beta-D-glucosyl-(1&lt;-&gt;1')-N-acylsphing-4-enine + UDP-alpha-D-galactose = a beta-D-Gal-(1-&gt;4)-beta-D-Glc-(1&lt;-&gt;1)-Cer(d18:1(4E)) + UDP + H(+). It participates in protein modification; protein glycosylation. The protein operates within sphingolipid metabolism. In terms of biological role, catalyzes the synthesis of lactosylceramide (LacCer) via the transfer of galactose from UDP-galactose to glucosylceramide (GlcCer). Required for proper patterning of the dorsoventral axis during embryogenesis through the regulation of BMP signaling. Plays a role in proteoglycan glycosylation that is required for BMP-dependent specification of the dorsoventral axis. The protein is Beta-1,4-galactosyltransferase 5 (b4galt5) of Danio rerio (Zebrafish).